The following is a 307-amino-acid chain: UDP-N-acetylenolpyruvoylglucosamine reductase (307 aa).

The 165-residue stretch at 33–197 (TGGNADFYIT…LEAAFTLAPG (165 aa)) folds into the FAD-binding PCMH-type domain. R176 is a catalytic residue. S226 (proton donor) is an active-site residue. The active site involves E296.

The protein belongs to the MurB family. It depends on FAD as a cofactor.

It localises to the cytoplasm. It carries out the reaction UDP-N-acetyl-alpha-D-muramate + NADP(+) = UDP-N-acetyl-3-O-(1-carboxyvinyl)-alpha-D-glucosamine + NADPH + H(+). The protein operates within cell wall biogenesis; peptidoglycan biosynthesis. Cell wall formation. The polypeptide is UDP-N-acetylenolpyruvoylglucosamine reductase (Staphylococcus aureus (strain COL)).